The following is a 254-amino-acid chain: Coproheme decarboxylase (254 aa).

Fe-coproporphyrin III contacts are provided by residues Arg-136, 150-154 (YPMDK), His-177, Gln-190, and Ser-228. Tyr-150 is an active-site residue.

Belongs to the ChdC family. Type 1 subfamily. Fe-coproporphyrin III serves as cofactor.

It carries out the reaction Fe-coproporphyrin III + 2 H2O2 + 2 H(+) = heme b + 2 CO2 + 4 H2O. It catalyses the reaction Fe-coproporphyrin III + H2O2 + H(+) = harderoheme III + CO2 + 2 H2O. The catalysed reaction is harderoheme III + H2O2 + H(+) = heme b + CO2 + 2 H2O. It participates in porphyrin-containing compound metabolism; protoheme biosynthesis. Its function is as follows. Involved in coproporphyrin-dependent heme b biosynthesis. Catalyzes the decarboxylation of Fe-coproporphyrin III (coproheme) to heme b (protoheme IX), the last step of the pathway. The reaction occurs in a stepwise manner with a three-propionate intermediate. The polypeptide is Coproheme decarboxylase (Bacillus licheniformis (strain ATCC 14580 / DSM 13 / JCM 2505 / CCUG 7422 / NBRC 12200 / NCIMB 9375 / NCTC 10341 / NRRL NRS-1264 / Gibson 46)).